The chain runs to 283 residues: Pantothenate synthetase (283 aa).

Position 31–38 (31–38) interacts with ATP; sequence MGALHDGH. His-38 functions as the Proton donor in the catalytic mechanism. Gln-62 serves as a coordination point for (R)-pantoate. Beta-alanine is bound at residue Gln-62. 148-151 lines the ATP pocket; that stretch reads GKKD. A (R)-pantoate-binding site is contributed by Gln-154. Residues Val-177 and 185 to 188 each bind ATP; that span reads KSSR.

This sequence belongs to the pantothenate synthetase family. As to quaternary structure, homodimer.

The protein resides in the cytoplasm. The enzyme catalyses (R)-pantoate + beta-alanine + ATP = (R)-pantothenate + AMP + diphosphate + H(+). Its pathway is cofactor biosynthesis; (R)-pantothenate biosynthesis; (R)-pantothenate from (R)-pantoate and beta-alanine: step 1/1. Its function is as follows. Catalyzes the condensation of pantoate with beta-alanine in an ATP-dependent reaction via a pantoyl-adenylate intermediate. The protein is Pantothenate synthetase of Staphylococcus aureus (strain MRSA252).